A 567-amino-acid chain; its full sequence is Probable transport protein (567 aa).

A compositionally biased stretch (basic and acidic residues) spans 1 to 30 (MSDRVEVNERRSDSVSEKEPARDDARKDVT). The tract at residues 1 to 38 (MSDRVEVNERRSDSVSEKEPARDDARKDVTDDQEDAPP) is disordered. Topologically, residues 1-46 (MSDRVEVNERRSDSVSEKEPARDDARKDVTDDQEDAPPFMTANNAR) are cytoplasmic. A helical transmembrane segment spans residues 47–67 (VMLVQAIGGSLNGYSIGFVGV). The Extracellular portion of the chain corresponds to 68–160 (YSTLFGYSTN…PSGYSSSESG (93 aa)). Residues 161–181 (IFAGSMIAGCLIGSVFAGPLA) form a helical membrane-spanning segment. Residues 182–189 (SKIGARLS) are Cytoplasmic-facing. The helical transmembrane segment at 190–210 (FLLVGLVGVVASVMYHASCAA) threads the bilayer. Topologically, residues 211–212 (DE) are extracellular. A helical transmembrane segment spans residues 213–233 (FWVLIVGRFVIGLFLGVICVA). Topologically, residues 234–249 (CPVYTDQNAHPKWKRT) are cytoplasmic. Residues 250-270 (IGVMFQVFTTLGIFVAALMGL) traverse the membrane as a helical segment. Residues 271–289 (ALGQSIRFDHDGDQKVMAR) are Extracellular-facing. A helical transmembrane segment spans residues 290 to 310 (MQGLCVFSTLFSLLTVVLGIV). Topologically, residues 311-341 (TRESRAKFDGGEEGRAELNPSEYGYVEMIPR) are cytoplasmic. The chain crosses the membrane as a helical span at residues 342 to 362 (LLMGCVMAGTLQLTGINAVMN). The Extracellular portion of the chain corresponds to 363 to 366 (YAPT). Residues 367-387 (IMGSLGLAPLVGNFVVMLWNF) traverse the membrane as a helical segment. Residues 388–404 (VTTLASIPLSYVFTMRH) are Cytoplasmic-facing. A helical transmembrane segment spans residues 405–425 (VFLFGSIFTSCMCLFMCGIPV). Over 426 to 437 (YPGVSKKLEAKN) the chain is Extracellular. Residues 438–458 (GVAITGILLFILGFEVCVGPC) form a helical membrane-spanning segment. The Cytoplasmic segment spans residues 459 to 480 (YYVLTQDMFPPSFRPRGASFTQ). Residues 481–501 (VAQFIFNLIINVCYPIATESI) form a helical membrane-spanning segment. At 502–514 (SGGPSGNQDKGQA) the chain is on the extracellular side. A helical transmembrane segment spans residues 515–535 (VAFIFFGGLGLICFVIQVFFL). Residues 536–567 (HPWDEERDGKKVVAPAIGKKELSEESIGNRAE) are Cytoplasmic-facing.

It belongs to the major facilitator superfamily. Sugar transporter (TC 2.A.1.1) family.

The protein localises to the membrane. Functionally, probable membrane transport protein. The sequence is that of Probable transport protein (PRO-1) from Leishmania enriettii.